The primary structure comprises 189 residues: Cell division protein SepF (189 aa).

A disordered region spans residues 25–70 (ESRVQQQAVKPSNSRPAQQEPVRDIKQPRLVSSSSQHVTNTPSSNE). Composition is skewed to polar residues over residues 27–41 (RVQQ…SRPA) and 54–70 (LVSS…SSNE).

The protein belongs to the SepF family. As to quaternary structure, homodimer. Interacts with FtsZ.

Its subcellular location is the cytoplasm. Cell division protein that is part of the divisome complex and is recruited early to the Z-ring. Probably stimulates Z-ring formation, perhaps through the cross-linking of FtsZ protofilaments. Its function overlaps with FtsA. This chain is Cell division protein SepF, found in Streptococcus gordonii (strain Challis / ATCC 35105 / BCRC 15272 / CH1 / DL1 / V288).